Here is a 468-residue protein sequence, read N- to C-terminus: MVFTALDPLGVPLGTAQASFGTDGIRGRVGTLLTPAFILQVGYWCGQVLPDQGPVLIGMDSRSSGAMVASALTAGLTAAGREVWTLGLCPTPAVPGLIRKLGAAGGLMVSASHNPPEDNGIKVFGADGAKLSPAKQGLIEAGLRGEAIGDKGRPTITSCGPAYQRDELLSHYRDALLASVLHQRLDGVPIVLDLCWGAATACGAEVFAALGADLTVLHGEPDGSRINVGCGSTQLEPLRRAVIERGAIMGFAFDGDADRMLALDGQGRVVDGDHVLYLWGSDLQDQQALPQQRLVATVMSNLGFERAWQQRGGVLERTPVGDQHVYAAMVESNAALGGEQSGHILSAAHGLCGDGVLTALQLATLCHGRGLSLGEWLDQSFQAFPQKLVNVRVPDLERRMGWQHCEPLQEAVLAAEAAMGEDGRVLVRASGTEPLLRVMIEASDSAAVEFWTVQLADLAEQHLNRGCV.

S112 serves as the catalytic Phosphoserine intermediate. Mg(2+) contacts are provided by S112, D254, D256, and D258. S112 carries the post-translational modification Phosphoserine.

This sequence belongs to the phosphohexose mutase family. Mg(2+) serves as cofactor. In terms of processing, activated by phosphorylation.

The enzyme catalyses alpha-D-glucosamine 1-phosphate = D-glucosamine 6-phosphate. In terms of biological role, catalyzes the conversion of glucosamine-6-phosphate to glucosamine-1-phosphate. The polypeptide is Phosphoglucosamine mutase (Prochlorococcus marinus (strain MIT 9303)).